A 417-amino-acid chain; its full sequence is Adenylosuccinate synthetase (417 aa).

GTP-binding positions include 11 to 17 (GDEGKGK) and 39 to 41 (GHT). D12 serves as the catalytic Proton acceptor. Residues D12 and G39 each contribute to the Mg(2+) site. Residues 12 to 15 (DEGK), 37 to 40 (NAGH), T126, R140, Q218, T233, and R295 each bind IMP. H40 (proton donor) is an active-site residue. 291–297 (TVSGRIR) lines the substrate pocket. Residues R297, 323 to 325 (KLD), and 406 to 408 (SNG) contribute to the GTP site.

This sequence belongs to the adenylosuccinate synthetase family. As to quaternary structure, homodimer. Mg(2+) serves as cofactor.

It localises to the cytoplasm. It carries out the reaction IMP + L-aspartate + GTP = N(6)-(1,2-dicarboxyethyl)-AMP + GDP + phosphate + 2 H(+). The protein operates within purine metabolism; AMP biosynthesis via de novo pathway; AMP from IMP: step 1/2. Its function is as follows. Plays an important role in the de novo pathway of purine nucleotide biosynthesis. Catalyzes the first committed step in the biosynthesis of AMP from IMP. The polypeptide is Adenylosuccinate synthetase (Neorickettsia sennetsu (strain ATCC VR-367 / Miyayama) (Ehrlichia sennetsu)).